A 583-amino-acid chain; its full sequence is Selenocysteine-specific elongation factor (583 aa).

A tr-type G domain is found at R5 to T203. A G1 region spans residues G14–T21. Residues G19, T21, and A22 each coordinate GTP. Residue T21 coordinates Mg(2+). Residues G46 to D50 are G2. The Mg(2+) site is built by T48 and D78. Residues D78–G81 form a G3 region. Residues N132–D135 are G4. Positions 135 and 173 each coordinate GTP. The tract at residues A171–K173 is G5. The tract at residues M371 to G390 is disordered. S524 carries the phosphoserine modification. Residues K528–V562 form a disordered region. A Phosphothreonine modification is found at T532. The Nuclear localization signal signature appears at T534–R540. The span at G542–E557 shows a compositional bias: basic and acidic residues. An Omega-N-methylarginine modification is found at R543.

The protein belongs to the TRAFAC class translation factor GTPase superfamily. Classic translation factor GTPase family. SelB subfamily. Requires Mg(2+) as cofactor. Mn(2+) serves as cofactor.

Its subcellular location is the cytoplasm. It is found in the nucleus. The catalysed reaction is GTP + H2O = GDP + phosphate + H(+). In terms of biological role, translation factor required for the incorporation of the rare amino acid selenocysteine encoded by UGA codons. Replaces the eRF1-eRF3-GTP ternary complex for the insertion of selenocysteine directed by the UGA codon. Insertion of selenocysteine at UGA codons is mediated by SECISBP2 and EEFSEC: SECISBP2 (1) specifically binds the SECIS sequence once the 80S ribosome encounters an in-frame UGA codon and (2) contacts the RPS27A/eS31 of the 40S ribosome before ribosome stalling. (3) GTP-bound EEFSEC then delivers selenocysteinyl-tRNA(Sec) to the 80S ribosome and adopts a preaccommodated state conformation. (4) After GTP hydrolysis, EEFSEC dissociates from the assembly, selenocysteinyl-tRNA(Sec) accommodates, and peptide bond synthesis and selenoprotein elongation occur. This Mus musculus (Mouse) protein is Selenocysteine-specific elongation factor (Eefsec).